A 154-amino-acid chain; its full sequence is tRNA (cytidine(34)-2'-O)-methyltransferase (154 aa).

S-adenosyl-L-methionine-binding residues include leucine 78, glycine 100, isoleucine 122, and serine 130.

This sequence belongs to the class IV-like SAM-binding methyltransferase superfamily. RNA methyltransferase TrmH family. TrmL subfamily. In terms of assembly, homodimer.

The protein resides in the cytoplasm. It carries out the reaction cytidine(34) in tRNA + S-adenosyl-L-methionine = 2'-O-methylcytidine(34) in tRNA + S-adenosyl-L-homocysteine + H(+). The enzyme catalyses 5-carboxymethylaminomethyluridine(34) in tRNA(Leu) + S-adenosyl-L-methionine = 5-carboxymethylaminomethyl-2'-O-methyluridine(34) in tRNA(Leu) + S-adenosyl-L-homocysteine + H(+). Its function is as follows. Methylates the ribose at the nucleotide 34 wobble position in the two leucyl isoacceptors tRNA(Leu)(CmAA) and tRNA(Leu)(cmnm5UmAA). Catalyzes the methyl transfer from S-adenosyl-L-methionine to the 2'-OH of the wobble nucleotide. The polypeptide is tRNA (cytidine(34)-2'-O)-methyltransferase (Saccharophagus degradans (strain 2-40 / ATCC 43961 / DSM 17024)).